A 209-amino-acid chain; its full sequence is MTGKKRSASSSRWLQEHFSDKYVQQAQKKGLRSRAWFKLDEIQQSDKLFKPGMTVVDLGAAPGGWSQYVVTQIGGKGRIIACDLLPMDPIVGVDFLQGDFRDELVMKALLERVGDSKVQVVMSDMAPNMSGTPAVDIPRAMYLVELALEMCRDVLALGGSFVVKVFQGEGFDEYLREIRSLFTKVKVRKPDSSRARSREVYIVATGRKP.

Positions 63, 65, 83, 99, and 124 each coordinate S-adenosyl-L-methionine. Lysine 164 acts as the Proton acceptor in catalysis.

It belongs to the class I-like SAM-binding methyltransferase superfamily. RNA methyltransferase RlmE family.

It localises to the cytoplasm. The catalysed reaction is uridine(2552) in 23S rRNA + S-adenosyl-L-methionine = 2'-O-methyluridine(2552) in 23S rRNA + S-adenosyl-L-homocysteine + H(+). In terms of biological role, specifically methylates the uridine in position 2552 of 23S rRNA at the 2'-O position of the ribose in the fully assembled 50S ribosomal subunit. This chain is Ribosomal RNA large subunit methyltransferase E, found in Shigella dysenteriae serotype 1 (strain Sd197).